Consider the following 289-residue polypeptide: Signal peptidase I (289 aa).

Topologically, residues 1 to 43 (MKKLTSTTTTLWDNKLFINNLKNFMQTNTESNNNKTTAQEWKS) are cytoplasmic. A helical transmembrane segment spans residues 44-64 (FILVVVIALMIRILIIESFVV). The Periplasmic portion of the chain corresponds to 65–289 (PTGSMKATIL…IFRNLYSIED (225 aa)). Residues Ser68 and Lys131 contribute to the active site.

It belongs to the peptidase S26 family.

It is found in the cell inner membrane. The enzyme catalyses Cleavage of hydrophobic, N-terminal signal or leader sequences from secreted and periplasmic proteins.. The sequence is that of Signal peptidase I (lepB) from Rickettsia bellii (strain OSU 85-389).